We begin with the raw amino-acid sequence, 369 residues long: Isocitrate dehydrogenase [NAD] subunit 2, mitochondrial (369 aa).

The N-terminal 15 residues, 1-15 (MLRNTFFRNTSRRFL), are a transit peptide targeting the mitochondrion. Position 105 is a phosphothreonine (Thr-105). Positions 119, 129, and 150 each coordinate substrate. Position 153 is a phosphothreonine (Thr-153). Asp-237 provides a ligand contact to substrate. Mg(2+)-binding residues include Asp-237, Asp-263, and Asp-267. Phosphothreonine is present on residues Thr-327 and Thr-349.

Belongs to the isocitrate and isopropylmalate dehydrogenases family. Octamer of two non-identical subunits IDH1 and IDH2. It depends on Mg(2+) as a cofactor. Requires Mn(2+) as cofactor.

The protein resides in the mitochondrion matrix. The catalysed reaction is D-threo-isocitrate + NAD(+) = 2-oxoglutarate + CO2 + NADH. Allosterically regulated by several compounds including AMP, NAD(+), and citrate. Performs an essential role in the oxidative function of the citric acid cycle. Also binds RNA; specifically to the 5'-untranslated leaders of mitochondrial mRNAs. The polypeptide is Isocitrate dehydrogenase [NAD] subunit 2, mitochondrial (IDH2) (Saccharomyces cerevisiae (strain ATCC 204508 / S288c) (Baker's yeast)).